The chain runs to 88 residues: Putative defensin-like protein 256 (88 aa).

The N-terminal stretch at 1–25 is a signal peptide; the sequence is MKSSIFFKLLLLVSLLVVIFRQSYA. 3 cysteine pairs are disulfide-bonded: Cys30/Cys46, Cys36/Cys53, and Cys40/Cys55.

This sequence belongs to the DEFL family.

The protein resides in the secreted. The polypeptide is Putative defensin-like protein 256 (Arabidopsis thaliana (Mouse-ear cress)).